A 152-amino-acid polypeptide reads, in one-letter code: Transcriptional regulator MraZ (152 aa).

2 SpoVT-AbrB domains span residues 5-52 and 81-124; these read ANAI…PLPE and ATEG…DHSV.

Belongs to the MraZ family. As to quaternary structure, forms oligomers.

The protein resides in the cytoplasm. The protein localises to the nucleoid. The chain is Transcriptional regulator MraZ from Pseudoalteromonas atlantica (strain T6c / ATCC BAA-1087).